We begin with the raw amino-acid sequence, 90 residues long: MAHKKGTGSTRNGRDSNSKRLGVKAYGGEKVTAGSILIRQRGTSVLPGINVGRGKDDTLFALTDGSVHFESIRRGLRNRKRINISTAKAV.

Residues 1–24 form a disordered region; that stretch reads MAHKKGTGSTRNGRDSNSKRLGVK.

This sequence belongs to the bacterial ribosomal protein bL27 family.

The protein is Large ribosomal subunit protein bL27 of Prochlorococcus marinus (strain NATL1A).